Reading from the N-terminus, the 394-residue chain is Large ribosomal subunit protein bL27m (394 aa).

A mitochondrion-targeting transit peptide spans 1–34; it reads MSFIKQVGKLIRPNDYSSSIFQTSFLNNVIQVRT. Disordered regions lie at residues 36–57 and 145–181; these read TKRA…LGPK and AEAE…QRAS. Residues 145-170 show a composition bias toward basic and acidic residues; that stretch reads AEAEKEENHMSRKEFLQQPELEKTRQ.

This sequence belongs to the bacterial ribosomal protein bL27 family.

The protein resides in the mitochondrion. Functionally, component of the large subunit of mitochondrial ribosome. In Debaryomyces hansenii (strain ATCC 36239 / CBS 767 / BCRC 21394 / JCM 1990 / NBRC 0083 / IGC 2968) (Yeast), this protein is Large ribosomal subunit protein bL27m (MRPL2).